The sequence spans 145 residues: D-aminoacyl-tRNA deacylase (145 aa).

The Gly-cisPro motif, important for rejection of L-amino acids signature appears at 137 to 138 (GP).

It belongs to the DTD family. In terms of assembly, homodimer.

The protein localises to the cytoplasm. The catalysed reaction is glycyl-tRNA(Ala) + H2O = tRNA(Ala) + glycine + H(+). It catalyses the reaction a D-aminoacyl-tRNA + H2O = a tRNA + a D-alpha-amino acid + H(+). Functionally, an aminoacyl-tRNA editing enzyme that deacylates mischarged D-aminoacyl-tRNAs. Also deacylates mischarged glycyl-tRNA(Ala), protecting cells against glycine mischarging by AlaRS. Acts via tRNA-based rather than protein-based catalysis; rejects L-amino acids rather than detecting D-amino acids in the active site. By recycling D-aminoacyl-tRNA to D-amino acids and free tRNA molecules, this enzyme counteracts the toxicity associated with the formation of D-aminoacyl-tRNA entities in vivo and helps enforce protein L-homochirality. This is D-aminoacyl-tRNA deacylase from Pelobacter propionicus (strain DSM 2379 / NBRC 103807 / OttBd1).